The primary structure comprises 114 residues: Putative pterin-4-alpha-carbinolamine dehydratase (114 aa).

Belongs to the pterin-4-alpha-carbinolamine dehydratase family.

It carries out the reaction (4aS,6R)-4a-hydroxy-L-erythro-5,6,7,8-tetrahydrobiopterin = (6R)-L-erythro-6,7-dihydrobiopterin + H2O. This chain is Putative pterin-4-alpha-carbinolamine dehydratase, found in Methylococcus capsulatus (strain ATCC 33009 / NCIMB 11132 / Bath).